The following is a 264-amino-acid chain: Thymidylate synthase (264 aa).

R21 serves as a coordination point for dUMP. Residue H51 participates in (6R)-5,10-methylene-5,6,7,8-tetrahydrofolate binding. 126-127 (RR) provides a ligand contact to dUMP. C146 functions as the Nucleophile in the catalytic mechanism. DUMP is bound by residues 166-169 (RSAD), N177, and 207-209 (HIY). Position 169 (D169) interacts with (6R)-5,10-methylene-5,6,7,8-tetrahydrofolate. Position 263 (S263) interacts with (6R)-5,10-methylene-5,6,7,8-tetrahydrofolate.

This sequence belongs to the thymidylate synthase family. Bacterial-type ThyA subfamily. In terms of assembly, homodimer.

The protein resides in the cytoplasm. It catalyses the reaction dUMP + (6R)-5,10-methylene-5,6,7,8-tetrahydrofolate = 7,8-dihydrofolate + dTMP. It participates in pyrimidine metabolism; dTTP biosynthesis. Its function is as follows. Catalyzes the reductive methylation of 2'-deoxyuridine-5'-monophosphate (dUMP) to 2'-deoxythymidine-5'-monophosphate (dTMP) while utilizing 5,10-methylenetetrahydrofolate (mTHF) as the methyl donor and reductant in the reaction, yielding dihydrofolate (DHF) as a by-product. This enzymatic reaction provides an intracellular de novo source of dTMP, an essential precursor for DNA biosynthesis. This Bacillus velezensis (strain DSM 23117 / BGSC 10A6 / LMG 26770 / FZB42) (Bacillus amyloliquefaciens subsp. plantarum) protein is Thymidylate synthase.